The chain runs to 292 residues: UPF0761 membrane protein Ping_3482 (292 aa).

6 helical membrane passes run 43–63 (LLSIVPLLAVIFYMLAAFPVF), 100–120 (MSMMGIGSLIAIALLLISTID), 139–159 (FTIYWTILSLGPVIIGASLAL), 179–199 (LLSLMPFILTWLTFAGVYTLV), 209–229 (ALIGGLIAAILFFFGTDLFRL), and 243–263 (ALAVIPILFVWIYYSWLIVLI).

Belongs to the UPF0761 family.

Its subcellular location is the cell inner membrane. The polypeptide is UPF0761 membrane protein Ping_3482 (Psychromonas ingrahamii (strain DSM 17664 / CCUG 51855 / 37)).